A 518-amino-acid polypeptide reads, in one-letter code: Vesicular inhibitory amino acid transporter (518 aa).

The Cytoplasmic portion of the chain corresponds to 1–125 (MATLIRSKLS…WNVTNAIQGM (125 aa)). The segment at 66 to 98 (EVPSGDPTAEGDSHYQRDGTGPPSSASKDEGLC) is disordered. The chain crosses the membrane as a helical span at residues 126–146 (FVLGLPYAILHGGYLGLFLII). Over 147–197 (FAAVVCCYTGKILIACLYEENEDGETVRVRDSYVDIANACCAPRFPKLGGR) the chain is Lumenal, vesicle. The chain crosses the membrane as a helical span at residues 198–218 (VVNVAQIIELVMTCILYVVVS). Topologically, residues 219–258 (GNLMYNSFPSLPISQKSWSIIATAMLLPCAFLKNLKAVSK) are cytoplasmic. The chain crosses the membrane as a helical span at residues 259-279 (FSLLCTLAHFVINVLVIAYCL). The Lumenal, vesicle portion of the chain corresponds to 280–298 (SRARDWAWDKVKFYIDVKK). A helical membrane pass occupies residues 299-319 (FPISIGIIVFSYTSQIFLPSL). Topologically, residues 320–334 (EGNMQSPKEFHCMMN) are cytoplasmic. Residues 335 to 355 (WTHIAACILKGLFALVAYLTW) traverse the membrane as a helical segment. Topologically, residues 356 to 376 (ADETKEVITDNLPSTIRAVVN) are lumenal, vesicle. The helical transmembrane segment at 377–397 (LFLVAKALLSYPLPFFAAVEV) threads the bilayer. The Cytoplasmic portion of the chain corresponds to 398–431 (LEKSLFQEGARAFFPNCYGGDGRLKSWGLTLRCA). Residues 432–452 (LVVFTLLMAIYVPHFALLMGL) form a helical membrane-spanning segment. Residues 453–454 (TG) are Lumenal, vesicle-facing. The chain crosses the membrane as a helical span at residues 455–475 (SLTGAGLCFLLPSLFHLKLLW). Topologically, residues 476–482 (RKLQWHQ) are cytoplasmic. The chain crosses the membrane as a helical span at residues 483-503 (VFFDVSIFVIGSICSVSGFVH). The Lumenal, vesicle segment spans residues 504 to 518 (SLEGLIEAFRFNIED).

This sequence belongs to the amino acid/polyamine transporter 2 family.

Its subcellular location is the cytoplasmic vesicle membrane. The protein localises to the presynapse. It carries out the reaction 4-aminobutanoate(out) + n H(+)(in) = 4-aminobutanoate(in) + n H(+)(out). It catalyses the reaction glycine(out) + n H(+)(in) = glycine(in) + n H(+)(out). The enzyme catalyses beta-alanine(out) + n H(+)(in) = beta-alanine(in) + n H(+)(out). Antiporter that exchanges vesicular protons for cytosolic 4-aminobutanoate or to a lesser extend glycine, thus allowing their secretion from nerve terminals. The transport is equally dependent on the chemical and electrical components of the proton gradient. May also transport beta-alanine. Acidification of GABAergic synaptic vesicles is a prerequisite for 4-aminobutanoate uptake. The protein is Vesicular inhibitory amino acid transporter of Xenopus tropicalis (Western clawed frog).